Consider the following 177-residue polypeptide: Large ribosomal subunit protein uL6 (177 aa).

The disordered stretch occupies residues 151-177 (KRPPEPYKGKGVKYADEHIRRKEGKKS). Over residues 152-177 (RPPEPYKGKGVKYADEHIRRKEGKKS) the composition is skewed to basic and acidic residues.

Belongs to the universal ribosomal protein uL6 family. As to quaternary structure, part of the 50S ribosomal subunit.

Its function is as follows. This protein binds to the 23S rRNA, and is important in its secondary structure. It is located near the subunit interface in the base of the L7/L12 stalk, and near the tRNA binding site of the peptidyltransferase center. This Fusobacterium nucleatum subsp. nucleatum (strain ATCC 25586 / DSM 15643 / BCRC 10681 / CIP 101130 / JCM 8532 / KCTC 2640 / LMG 13131 / VPI 4355) protein is Large ribosomal subunit protein uL6.